The chain runs to 222 residues: Glutathione S-transferase alpha-2 (222 aa).

Residues 3–83 (GKPVLHYFNA…YIATKYDLYG (81 aa)) form the GST N-terminal domain. Position 4 is an N6-succinyllysine (K4). Residues Y9, K45, 54 to 55 (QV), and 67 to 68 (QT) contribute to the glutathione site. Residues 85 to 208 (DMKERALIDM…QPGSQRKPAM (124 aa)) enclose the GST C-terminal domain.

It belongs to the GST superfamily. Alpha family. In terms of assembly, homodimer or heterodimer of GSTA1 and GSTA2.

The protein localises to the cytoplasm. The enzyme catalyses RX + glutathione = an S-substituted glutathione + a halide anion + H(+). Functionally, catalyzes the conjugation of glutathione to a large variety of electrophilic compounds. This is Glutathione S-transferase alpha-2 (Gsta2) from Rattus norvegicus (Rat).